Reading from the N-terminus, the 363-residue chain is Small ribosomal subunit biogenesis GTPase RsgA (363 aa).

The CP-type G domain maps to 112 to 268; sequence HQQVIAANID…LIDTPGMREL (157 aa). GTP-binding positions include 157 to 160 and 210 to 218; these read TKAD and GSSGAGKST. Zn(2+) contacts are provided by cysteine 291, cysteine 296, histidine 298, and cysteine 304. A disordered region spans residues 340–363; it reads RVAQNNRGKGSGKRPASIDRPGRR.

Belongs to the TRAFAC class YlqF/YawG GTPase family. RsgA subfamily. In terms of assembly, monomer. Associates with 30S ribosomal subunit, binds 16S rRNA. Zn(2+) is required as a cofactor.

It localises to the cytoplasm. One of several proteins that assist in the late maturation steps of the functional core of the 30S ribosomal subunit. Helps release RbfA from mature subunits. May play a role in the assembly of ribosomal proteins into the subunit. Circularly permuted GTPase that catalyzes slow GTP hydrolysis, GTPase activity is stimulated by the 30S ribosomal subunit. This Xanthomonas oryzae pv. oryzae (strain PXO99A) protein is Small ribosomal subunit biogenesis GTPase RsgA.